The primary structure comprises 591 residues: MKKISLPKIGIRPVIDGRRMGVRESLEEQTMNMAKATAALIIEKIRHACGAQVECVIADTCIAGMAESAACEEKFSSQNVGVTITVTPCWCYGSETIDMDPMRPKAIWGFNGTERPGAVYLAAALAAHNQKGIPAFSIYGHDVQDADDVSIPADVEEKLLRFARAGLAVASMKGKSYLSVGGVSMGIAGSIVDHNFFESWLGMKVQAVDMTELRRRIDQKIYDEAELEMALAWADKNFRYGEDQNAQQYKRNEAQNRAVLKESLLMAMCIRDMMQGNKTLADKGLVEESLGYNAIAAGFQGQRHWTDQYPNGDTAEALLNSSFDWNGVREPFIVATENDSLNGVAMLFGHQLTGTAQIFADVRTYWSPEAVERVTGQALNGLAEHGIIHLINSGSAALDGACKQRDSEGKPTMKPHWEISQQEADACLAATEWCPAIHEYFRGGGYSSRFLTEGGVPFTMTRVNMIKGLGPVLQIAEGWSVELPKVMHDQLDARTNSTWPTTWFAPRLTGKGPFTDVYSVMANWGANHGVLTIGHVGADFITLAAMLRIPVCMHNVEEAKIYRPSAWAAHGMDVEGQDYRACQNYGPLYKR.

Active-site proton acceptor residues include Glu-337 and Asp-361. 3 residues coordinate Mn(2+): Glu-337, Asp-361, and His-528.

It belongs to the L-fucose isomerase family. In terms of assembly, homohexamer. Mn(2+) is required as a cofactor.

It is found in the cytoplasm. It carries out the reaction L-fucose = L-fuculose. The protein operates within carbohydrate degradation; L-fucose degradation; L-lactaldehyde and glycerone phosphate from L-fucose: step 1/3. Its function is as follows. Converts the aldose L-fucose into the corresponding ketose L-fuculose. This Salmonella arizonae (strain ATCC BAA-731 / CDC346-86 / RSK2980) protein is L-fucose isomerase.